The chain runs to 453 residues: Probable phenylalanine--tRNA ligase, mitochondrial (453 aa).

Residues 1-27 (MLLTLRVQGARHWLKSTRCLASSAAPA) constitute a mitochondrion transit peptide. Substrate is bound by residues 142-145 (TAHQ), arginine 164, 171-173 (THY), 178-180 (QAD), glutamate 285, and phenylalanine 310. One can recognise an FDX-ACB domain in the interval 356-453 (SHYPQCTNDL…SVDSFNVQIR (98 aa)).

It belongs to the class-II aminoacyl-tRNA synthetase family.

The protein localises to the mitochondrion matrix. It catalyses the reaction tRNA(Phe) + L-phenylalanine + ATP = L-phenylalanyl-tRNA(Phe) + AMP + diphosphate + H(+). Is responsible for the charging of tRNA(Phe) with phenylalanine in mitochondrial translation. The polypeptide is Probable phenylalanine--tRNA ligase, mitochondrial (Drosophila melanogaster (Fruit fly)).